Consider the following 89-residue polypeptide: MAHKKAGGSSRNGRDSAGQRRGVKRFGGERVLAGNILVRQLGTRVHPGDNVGMGRDYTLFATVEGTVKYEKYTRKKKVQTRVHVVPAQA.

The segment at Met1–Phe26 is disordered.

The protein belongs to the bacterial ribosomal protein bL27 family.

The polypeptide is Large ribosomal subunit protein bL27 (Nitratidesulfovibrio vulgaris (strain DSM 19637 / Miyazaki F) (Desulfovibrio vulgaris)).